The chain runs to 354 residues: Myosin-binding protein H-like (354 aa).

Residues M1–I47 are disordered. A Phosphoserine modification is found at S38. The Ig-like C2-type 1 domain occupies P45–D139. The 91-residue stretch at P148–A238 folds into the Fibronectin type-III domain. In terms of domain architecture, Ig-like C2-type 2 spans P261 to D345. C282 and C333 are disulfide-bonded. R321 bears the Omega-N-methylarginine mark.

This sequence belongs to the immunoglobulin superfamily. MyBP family. Expressed in heart, with higher expression in the atria. In terms of tissue distribution, expressed in left atrium and ventricle, arteria mammaria interna and skeletal muscle. As to expression, expressed specifically en the left atrium.

It is found in the cytoplasm. The protein resides in the myofibril. It localises to the sarcomere. Functionally, myosin-binding protein which plays a role in cardiac function. Seems to regulate conduction in the atria and ventricular conduction systems. This Homo sapiens (Human) protein is Myosin-binding protein H-like.